The following is a 564-amino-acid chain: Cytochrome c oxidase subunit 1 (564 aa).

The segment at 1 to 23 (MTAVAPRLENYAEPTRPAPTGGA) is disordered. 7 consecutive transmembrane segments (helical) span residues 43-63 (MMYI…ALLI), 83-103 (LFTL…VWGF), 122-142 (LNAF…AGFL), 171-191 (FWII…VNMI), 214-234 (IFVA…AALG), 259-279 (LFWF…FGIV), and 292-312 (FGYI…MAVW). Fe(II)-heme a is bound at residue His87. Cu cation-binding residues include His265 and Tyr269. The 1'-histidyl-3'-tyrosine (His-Tyr) cross-link spans 265 to 269 (HPEVY). 2 residues coordinate Cu cation: His314 and His315. Helical transmembrane passes span 316–336 (MFVT…LISV) and 360–380 (MTWT…GIML). His398 serves as a coordination point for heme a3. 3 consecutive transmembrane segments (helical) span residues 399 to 419 (FHYT…YFWF), 434 to 454 (IHFW…HWVG), and 477 to 497 (ISTV…WNVF). His400 serves as a coordination point for Fe(II)-heme a.

The protein belongs to the heme-copper respiratory oxidase family. As to quaternary structure, associates with subunits II, III and IV to form cytochrome c oxidase. Cu(2+) is required as a cofactor. Requires heme as cofactor.

It is found in the cell membrane. The enzyme catalyses 4 Fe(II)-[cytochrome c] + O2 + 8 H(+)(in) = 4 Fe(III)-[cytochrome c] + 2 H2O + 4 H(+)(out). The protein operates within energy metabolism; oxidative phosphorylation. Its function is as follows. Cytochrome c oxidase is the component of the respiratory chain that catalyzes the reduction of oxygen to water. Subunits 1-3 form the functional core of the enzyme complex. CO I is the catalytic subunit of the enzyme. Electrons originating in cytochrome c are transferred via the copper A center of subunit 2 and heme A of subunit 1 to the bimetallic center formed by heme A3 and copper B. The sequence is that of Cytochrome c oxidase subunit 1 (ctaD) from Corynebacterium diphtheriae (strain ATCC 700971 / NCTC 13129 / Biotype gravis).